Here is a 363-residue protein sequence, read N- to C-terminus: Probable transglycosylase BTH_I0986 (363 aa).

This sequence belongs to the glycosyltransferase group 1 family. Glycosyltransferase 4 subfamily.

Probably a transglycosylase. Probably involved in synthesis of the outer membrane receptor for a cellular contact-dependent growth inhibition (CDI) system. In Burkholderia thailandensis (strain ATCC 700388 / DSM 13276 / CCUG 48851 / CIP 106301 / E264), this protein is Probable transglycosylase BTH_I0986.